Here is a 315-residue protein sequence, read N- to C-terminus: Manganese-dependent 2,3-dihydroxybiphenyl 1,2-dioxygenase (315 aa).

VOC domains follow at residues 7 to 121 and 150 to 273; these read KFGH…IYYD and RIDH…LFSG. Residues His-153, His-216, and Glu-269 each coordinate Mn(2+).

The protein belongs to the extradiol ring-cleavage dioxygenase family. As to quaternary structure, homotetramer. Requires Mn(2+) as cofactor.

The catalysed reaction is biphenyl-2,3-diol + O2 = 2-hydroxy-6-oxo-6-phenylhexa-2,4-dienoate + H(+). It participates in xenobiotic degradation; biphenyl degradation; 2-hydroxy-2,4-pentadienoate and benzoate from biphenyl: step 3/4. In terms of biological role, catalyzes the meta-cleavage of the hydroxylated biphenyl ring. The enzyme can oxidize a wide range of substrates, and the substrate preference order is 2,3-dihydroxybiphenyl &gt; 3-methylcatechol &gt; catechol &gt; 4-methylcatechol &gt; 4-chlorocatechol. The sequence is that of Manganese-dependent 2,3-dihydroxybiphenyl 1,2-dioxygenase (bphC) from Geobacillus genomosp. 3.